The following is a 141-amino-acid chain: Protein C19orf12 homolog (141 aa).

The chain crosses the membrane as a helical span at residues 37 to 57; sequence GLAFAGGLIGGPLGIAVGGAV.

It belongs to the C19orf12 family.

It is found in the mitochondrion. It localises to the mitochondrion membrane. The protein resides in the endoplasmic reticulum. Its subcellular location is the cytoplasm. The protein localises to the cytosol. The sequence is that of Protein C19orf12 homolog from Danio rerio (Zebrafish).